We begin with the raw amino-acid sequence, 785 residues long: Endonuclease MutS2 (785 aa).

334-341 is an ATP binding site; that stretch reads GPNTGGKT. Positions 710-785 constitute a Smr domain; the sequence is LDLRGKRYEE…GNGATIVHFK (76 aa).

Belongs to the DNA mismatch repair MutS family. MutS2 subfamily. As to quaternary structure, homodimer. Binds to stalled ribosomes, contacting rRNA.

Functionally, endonuclease that is involved in the suppression of homologous recombination and thus may have a key role in the control of bacterial genetic diversity. In terms of biological role, acts as a ribosome collision sensor, splitting the ribosome into its 2 subunits. Detects stalled/collided 70S ribosomes which it binds and splits by an ATP-hydrolysis driven conformational change. Acts upstream of the ribosome quality control system (RQC), a ribosome-associated complex that mediates the extraction of incompletely synthesized nascent chains from stalled ribosomes and their subsequent degradation. Probably generates substrates for RQC. This chain is Endonuclease MutS2, found in Pediococcus pentosaceus (strain ATCC 25745 / CCUG 21536 / LMG 10740 / 183-1w).